We begin with the raw amino-acid sequence, 95 residues long: Co-chaperonin GroES (95 aa).

This sequence belongs to the GroES chaperonin family. Heptamer of 7 subunits arranged in a ring. Interacts with the chaperonin GroEL.

The protein resides in the cytoplasm. In terms of biological role, together with the chaperonin GroEL, plays an essential role in assisting protein folding. The GroEL-GroES system forms a nano-cage that allows encapsulation of the non-native substrate proteins and provides a physical environment optimized to promote and accelerate protein folding. GroES binds to the apical surface of the GroEL ring, thereby capping the opening of the GroEL channel. This chain is Co-chaperonin GroES, found in Lachnoclostridium phytofermentans (strain ATCC 700394 / DSM 18823 / ISDg) (Clostridium phytofermentans).